We begin with the raw amino-acid sequence, 20 residues long: Expansin-B (20 aa).

Residues 1-20 (GPPKVAPGKXISASFGGEWL) are disordered.

This sequence belongs to the expansin family. Expansin B subfamily.

The protein localises to the secreted. It is found in the cell wall. Its subcellular location is the membrane. In terms of biological role, may aid fertilization by loosening the cell wall of the stigma and style, thereby facilitating penetration of the pollen tube. Acts selectively on grass cell walls, which are relatively poor in pectins and xyloglucans and rich in glucuronoarabinoxylans and (1-3),(1-4)-beta-D-glucans, when compared with cell walls of other angiosperms, including other monocots. The polypeptide is Expansin-B (Paspalum notatum (Bahia grass)).